Here is a 230-residue protein sequence, read N- to C-terminus: Ribonuclease 3 (230 aa).

An RNase III domain is found at 1 to 134; it reads MKQLEELLST…FLGALLLDKG (134 aa). Glutamate 47 is a binding site for Mg(2+). Aspartate 51 is a catalytic residue. Mg(2+) contacts are provided by aspartate 120 and glutamate 123. Glutamate 123 is an active-site residue. Positions 160-229 constitute a DRBM domain; that stretch reads DYKTCLQEFL…AKNALAQLSE (70 aa).

The protein belongs to the ribonuclease III family. Homodimer. Mg(2+) serves as cofactor.

The protein resides in the cytoplasm. The enzyme catalyses Endonucleolytic cleavage to 5'-phosphomonoester.. Its function is as follows. Digests double-stranded RNA. Involved in the processing of primary rRNA transcript to yield the immediate precursors to the large and small rRNAs (23S and 16S). Processes some mRNAs, and tRNAs when they are encoded in the rRNA operon. Processes pre-crRNA and tracrRNA of type II CRISPR loci if present in the organism. In Streptococcus pyogenes serotype M49 (strain NZ131), this protein is Ribonuclease 3.